The chain runs to 216 residues: Enolase-phosphatase E1 (216 aa).

Mg(2+) contacts are provided by D8 and E10. Substrate is bound by residues 115-116 (SS) and K149. A Mg(2+)-binding site is contributed by D172.

This sequence belongs to the HAD-like hydrolase superfamily. MasA/MtnC family. Monomer. Mg(2+) is required as a cofactor.

It localises to the cytoplasm. It is found in the nucleus. The catalysed reaction is 5-methylsulfanyl-2,3-dioxopentyl phosphate + H2O = 1,2-dihydroxy-5-(methylsulfanyl)pent-1-en-3-one + phosphate. Its pathway is amino-acid biosynthesis; L-methionine biosynthesis via salvage pathway; L-methionine from S-methyl-5-thio-alpha-D-ribose 1-phosphate: step 3/6. The protein operates within amino-acid biosynthesis; L-methionine biosynthesis via salvage pathway; L-methionine from S-methyl-5-thio-alpha-D-ribose 1-phosphate: step 4/6. Bifunctional enzyme that catalyzes the enolization of 2,3-diketo-5-methylthiopentyl-1-phosphate (DK-MTP-1-P) into the intermediate 2-hydroxy-3-keto-5-methylthiopentenyl-1-phosphate (HK-MTPenyl-1-P), which is then dephosphorylated to form the acireductone 1,2-dihydroxy-3-keto-5-methylthiopentene (DHK-MTPene). In Schizosaccharomyces pombe (strain 972 / ATCC 24843) (Fission yeast), this protein is Enolase-phosphatase E1 (utr4).